A 251-amino-acid polypeptide reads, in one-letter code: Small ribosomal subunit protein uS2 (251 aa).

Residues 232–251 form a disordered region; that stretch reads LQTGEEEMAAAEGESEQVEA. The span at 235–251 shows a compositional bias: acidic residues; that stretch reads GEEEMAAAEGESEQVEA.

It belongs to the universal ribosomal protein uS2 family.

This Geobacter metallireducens (strain ATCC 53774 / DSM 7210 / GS-15) protein is Small ribosomal subunit protein uS2.